A 934-amino-acid polypeptide reads, in one-letter code: Bifunctional uridylyltransferase/uridylyl-removing enzyme (934 aa).

A uridylyltransferase region spans residues 1–379; the sequence is MSAHDLKLEE…TFSRRKRKLS (379 aa). The uridylyl-removing stretch occupies residues 380 to 736; sequence ADGDFVSENH…AKPHTFEAVT (357 aa). The region spanning 496-613 is the HD domain; the sequence is VDEHLLRCIA…IDFADTVQTM (118 aa). 2 ACT domains span residues 737-819 and 848-931; these read EITV…VLAK and VIEV…RSSQ.

The protein belongs to the GlnD family. It depends on Mg(2+) as a cofactor.

The catalysed reaction is [protein-PII]-L-tyrosine + UTP = [protein-PII]-uridylyl-L-tyrosine + diphosphate. The enzyme catalyses [protein-PII]-uridylyl-L-tyrosine + H2O = [protein-PII]-L-tyrosine + UMP + H(+). Uridylyltransferase (UTase) activity is inhibited by glutamine, while glutamine activates uridylyl-removing (UR) activity. Functionally, modifies, by uridylylation and deuridylylation, the PII regulatory proteins (GlnB and homologs), in response to the nitrogen status of the cell that GlnD senses through the glutamine level. Under low glutamine levels, catalyzes the conversion of the PII proteins and UTP to PII-UMP and PPi, while under higher glutamine levels, GlnD hydrolyzes PII-UMP to PII and UMP (deuridylylation). Thus, controls uridylylation state and activity of the PII proteins, and plays an important role in the regulation of nitrogen assimilation and metabolism. In Brucella anthropi (strain ATCC 49188 / DSM 6882 / CCUG 24695 / JCM 21032 / LMG 3331 / NBRC 15819 / NCTC 12168 / Alc 37) (Ochrobactrum anthropi), this protein is Bifunctional uridylyltransferase/uridylyl-removing enzyme.